The following is a 654-amino-acid chain: Hemagglutinin-esterase-fusion glycoprotein (654 aa).

The N-terminal stretch at Met-1–Ala-14 is a signal peptide. Residues Glu-15 to Tyr-40 are fusion domain-1. The Extracellular portion of the chain corresponds to Glu-15–Ser-629. Intrachain disulfides connect Cys-20–Cys-582, Cys-209–Cys-251, Cys-228–Cys-315, and Cys-236–Cys-288. N-linked (GlcNAc...) asparagine; by host glycosylation is found at Asn-26 and Asn-61. Positions Ala-41–Glu-157 are esterase domain-1. Catalysis depends on Ser-71, which acts as the Nucleophile. N-linked (GlcNAc...) asparagine; by host glycans are attached at residues Asn-143 and Asn-188. The N-acetyl-9-O-acetylneuraminic acid binding stretch occupies residues Glu-157 to Met-309. Positions Met-309–Glu-363 are esterase domain-2. Positions Ala-364–Lys-654 are fusion domain-2. Catalysis depends on charge relay system residues Asp-365 and His-368. Asn-394, Asn-551, and Asn-602 each carry an N-linked (GlcNAc...) asparagine; by host glycan. Residues Leu-630–Ile-650 form a helical membrane-spanning segment. Residues Cys-651–Lys-654 lie on the Cytoplasmic side of the membrane.

Belongs to the influenza viruses hemagglutinin family. In terms of assembly, homotrimer of disulfide-linked HEF1-HEF2. In terms of processing, in natural infection, inactive HEF is matured into HEF1 and HEF2 outside the cell by one or more trypsin-like, arginine-specific endoprotease.

Its subcellular location is the virion membrane. It localises to the host cell membrane. It catalyses the reaction N-acetyl-9-O-acetylneuraminate + H2O = N-acetylneuraminate + acetate + H(+). It carries out the reaction N-acetyl-4-O-acetylneuraminate + H2O = N-acetylneuraminate + acetate + H(+). Functionally, binds to the N-acetyl-9-O-acetylneuraminic acid residues on the cell surface, bringing about the attachment of the virus particle to the cell. Plays a major role in the determination of host range restriction and virulence. Class I viral fusion protein. Responsible for penetration of the virus into the cell cytoplasm by mediating the fusion of the membrane of the endocytosed virus particle with the endosomal membrane. Low pH in endosomes induce an irreversible conformational change in HEF2, releasing the fusion hydrophobic peptide. Several trimers are required to form a competent fusion pore. Displays a receptor-destroying activity which is a neuraminidate-O-acetyl esterase. This activity cleaves off any receptor on the cell surface, which would otherwise prevent virions release. These cleavages prevent self-aggregation and ensure the efficient spread of the progeny virus from cell to cell. This Influenza C virus (strain C/California/1978) protein is Hemagglutinin-esterase-fusion glycoprotein.